The following is a 93-amino-acid chain: Pyrimidine/purine nucleoside phosphorylase (93 aa).

It belongs to the nucleoside phosphorylase PpnP family.

The enzyme catalyses a purine D-ribonucleoside + phosphate = a purine nucleobase + alpha-D-ribose 1-phosphate. It catalyses the reaction adenosine + phosphate = alpha-D-ribose 1-phosphate + adenine. The catalysed reaction is cytidine + phosphate = cytosine + alpha-D-ribose 1-phosphate. It carries out the reaction guanosine + phosphate = alpha-D-ribose 1-phosphate + guanine. The enzyme catalyses inosine + phosphate = alpha-D-ribose 1-phosphate + hypoxanthine. It catalyses the reaction thymidine + phosphate = 2-deoxy-alpha-D-ribose 1-phosphate + thymine. The catalysed reaction is uridine + phosphate = alpha-D-ribose 1-phosphate + uracil. It carries out the reaction xanthosine + phosphate = alpha-D-ribose 1-phosphate + xanthine. Functionally, catalyzes the phosphorolysis of diverse nucleosides, yielding D-ribose 1-phosphate and the respective free bases. Can use uridine, adenosine, guanosine, cytidine, thymidine, inosine and xanthosine as substrates. Also catalyzes the reverse reactions. This is Pyrimidine/purine nucleoside phosphorylase from Photobacterium profundum (strain SS9).